A 460-amino-acid chain; its full sequence is Argininosuccinate lyase (460 aa).

This sequence belongs to the lyase 1 family. Argininosuccinate lyase subfamily.

The protein localises to the cytoplasm. The enzyme catalyses 2-(N(omega)-L-arginino)succinate = fumarate + L-arginine. Its pathway is amino-acid biosynthesis; L-arginine biosynthesis; L-arginine from L-ornithine and carbamoyl phosphate: step 3/3. This is Argininosuccinate lyase from Streptococcus mutans serotype c (strain ATCC 700610 / UA159).